A 405-amino-acid polypeptide reads, in one-letter code: 8-amino-7-oxononanoate synthase 2 (405 aa).

Arg-20 is a binding site for substrate. 116-117 provides a ligand contact to pyridoxal 5'-phosphate; that stretch reads GY. His-141 is a substrate binding site. Pyridoxal 5'-phosphate contacts are provided by Ser-187, His-215, and Thr-243. The residue at position 246 (Lys-246) is an N6-(pyridoxal phosphate)lysine. A substrate-binding site is contributed by Thr-369.

It belongs to the class-II pyridoxal-phosphate-dependent aminotransferase family. BioF subfamily. As to quaternary structure, homodimer. Pyridoxal 5'-phosphate serves as cofactor.

It catalyses the reaction 6-carboxyhexanoyl-[ACP] + L-alanine + H(+) = (8S)-8-amino-7-oxononanoate + holo-[ACP] + CO2. Its pathway is cofactor biosynthesis; biotin biosynthesis. Its function is as follows. Catalyzes the decarboxylative condensation of pimeloyl-[acyl-carrier protein] and L-alanine to produce 8-amino-7-oxononanoate (AON), [acyl-carrier protein], and carbon dioxide. The sequence is that of 8-amino-7-oxononanoate synthase 2 from Polaromonas sp. (strain JS666 / ATCC BAA-500).